Reading from the N-terminus, the 122-residue chain is Protein TCL1B3 (122 aa).

Belongs to the TCL1 family.

The chain is Protein TCL1B3 (Tcl1b3) from Mus musculus (Mouse).